The primary structure comprises 353 residues: MQTYGDPNVSYAWYAANAGAVTNKSGRFISSHIAHTGLICFGAGANTLFELARYNPDLPMGSQGLVVLPHLAGLGLGGISNGVFTDTYQLLVVAILHLILSGVYGGGGMLHAFRYEEKLESYPATSRANKFKFDWNDPDRLTFILGHHLLFLAAGNIQFVEWARVHGIYDPVAGAVRQVEYNLDLGMIWNHQFDFLSISSLEDIMGGHAFLAFFMAAGGVFHILTKNYGEYNSFKGADLLSAEFVLSTSLAGAAYTAFVAALWCASNTTIYPVDLYGDVLQFKLGIAPYWIDTDSSLAADAHTGRAWLTNVHFFIGFFYLQGHFFHGLRALGFDFKSIGKLFDNLETSETTLN.

A run of 6 helical transmembrane segments spans residues 28–48 (FISS…ANTL), 64–84 (GLVV…NGVF), 90–110 (LLVV…GGML), 204–224 (IMGG…FHIL), 244–264 (FVLS…ALWC), and 308–328 (LTNV…FHGL).

It belongs to the PsbB/PsbC family. IsiA/Pcb subfamily. The antenna complex consists of divinyl chlorophylls (a and b) and divinyl chlorophyll a/b binding proteins and binds more divinyl chlorophyll b than does the antenna complex from high-light-adapted Prochlorococcus. Also forms complexes with PSI, consisting of a PSI trimer with surrounded by a PcbG ring (probably with 18 subunits). Is the only subunit found in this ring under iron-replete conditions. Requires divinyl chlorophyll a as cofactor. The cofactor is divinyl chlorophyll b.

It localises to the cellular thylakoid membrane. Functionally, the antenna complex functions as a light receptor, it captures and delivers excitation energy to photosystems I. The Prochlorales pcb genes are not related to higher plant LHCs. The sequence is that of Divinyl chlorophyll a/b light-harvesting protein PcbG (pcbG) from Prochlorococcus marinus (strain SARG / CCMP1375 / SS120).